We begin with the raw amino-acid sequence, 873 residues long: E3 ubiquitin-protein ligase UPL5 (873 aa).

Polar residues predominate over residues 1-19 (MTLSRSSADDSTNNANRSY). Disordered regions lie at residues 1-37 (MTLS…DSSD) and 70-90 (RSGE…SNRP). In terms of domain architecture, Ubiquitin-like spans 95 to 171 (LQIFVRMMSG…LQLVARMQST (77 aa)). Residues 272 to 296 (CLPIVLEFCKLLRKVCPDQKLYVTC) enclose the C-type lectin domain. Residues 532-873 (SPEALHGGLF…DHVSSSFGKW (342 aa)) enclose the HECT domain. The active-site Glycyl thioester intermediate is C839.

It belongs to the UPL family. As to quaternary structure, interacts with WRKY53.

Its subcellular location is the cytoplasm. The catalysed reaction is S-ubiquitinyl-[E2 ubiquitin-conjugating enzyme]-L-cysteine + [acceptor protein]-L-lysine = [E2 ubiquitin-conjugating enzyme]-L-cysteine + N(6)-ubiquitinyl-[acceptor protein]-L-lysine.. Its pathway is protein modification; protein ubiquitination. Its function is as follows. E3 ubiquitin protein ligase that regulates leaf senescence through ubiquitination and subsequent degradation of WRKY53. The protein is E3 ubiquitin-protein ligase UPL5 (UPL5) of Arabidopsis thaliana (Mouse-ear cress).